We begin with the raw amino-acid sequence, 194 residues long: Cathelicidin-related peptide isoform 3 (194 aa).

The signal sequence occupies residues 1–22; that stretch reads MQGFFWKTWLVLAVCGTPASLA. Positions 23-164 are excised as a propeptide; that stretch reads HRPLSYGEAL…DQPKRVKRFK (142 aa). 2 cysteine pairs are disulfide-bonded: cysteine 79–cysteine 90 and cysteine 101–cysteine 118. Residues 125–145 are compositionally biased toward acidic residues; that stretch reads EEEEEEEEEEQKAEAENDEEV. A disordered region spans residues 125-156; that stretch reads EEEEEEEEEEQKAEAENDEEVEKEKGDEEKDQ. A compositionally biased stretch (basic and acidic residues) spans 146 to 156; sequence EKEKGDEEKDQ.

The protein belongs to the cathelicidin family. In terms of tissue distribution, expressed by the venom gland.

The protein resides in the secreted. It localises to the target cell membrane. Potent antimicrobial peptide against Gram-negative and Gram-positive bacteria. Adopts an amphipathic alpha helical conformation, that may allow to partition into the target membrane. Low hemolytic activities have been observed on mammalian cells. The polypeptide is Cathelicidin-related peptide isoform 3 (Crotalus durissus cascavella (Northeastern Brazilian rattlesnake)).